The primary structure comprises 158 residues: UPF0336 protein Mb0654 (158 aa).

It belongs to the UPF0336 family.

The protein is UPF0336 protein Mb0654 of Mycobacterium bovis (strain ATCC BAA-935 / AF2122/97).